A 408-amino-acid chain; its full sequence is Bone morphogenetic protein 4 (408 aa).

The signal sequence occupies residues 1 to 19 (MIPGNRMLMVVLLCQVLLG). The propeptide occupies 20 to 292 (GATDASLIPE…HTLTRRRAKR (273 aa)). Residue Ser91 is modified to Phosphoserine. Positions 91–113 (SGEEEEEEQSQGTGLEYPERPAS) are disordered. 2 N-linked (GlcNAc...) asparagine glycosylation sites follow: Asn144 and Asn209. Positions 281–307 (RGHTLTRRRAKRSPKHHPQRSRKKNKN) are disordered. Basic residues predominate over residues 284-307 (TLTRRRAKRSPKHHPQRSRKKNKN). Disulfide bonds link Cys308-Cys373, Cys337-Cys405, and Cys341-Cys407. N-linked (GlcNAc...) asparagine glycosylation is found at Asn350 and Asn365.

This sequence belongs to the TGF-beta family. Homodimer; disulfide-linked. Interacts with GREM2. Part of a complex consisting of TWSG1 and CHRD. Interacts with the serine proteases, HTRA1 and HTRA3; the interaction with either inhibits BMP4-mediated signaling. The HTRA protease activity is required for this inhibition. Interacts with SOSTDC1. Interacts with FBN1 (via N-terminal domain) and FBN2. Interacts with type I receptor BMPR1A. Interacts with type II receptor BMPR2. Interacts with FSTL1; this interaction inhibits the activation of the BMP4/Smad1/5/8 signaling pathway. Interacts with SCUBE3. Interacts with TGFBR3.

Its subcellular location is the secreted. The protein localises to the extracellular space. It is found in the extracellular matrix. Growth factor of the TGF-beta superfamily that plays essential roles in many developmental processes, including neurogenesis, vascular development, angiogenesis and osteogenesis. Acts in concert with PTHLH/PTHRP to stimulate ductal outgrowth during embryonic mammary development and to inhibit hair follicle induction. Initiates the canonical BMP signaling cascade by associating with type I receptor BMPR1A and type II receptor BMPR2. Once all three components are bound together in a complex at the cell surface, BMPR2 phosphorylates and activates BMPR1A. In turn, BMPR1A propagates signal by phosphorylating SMAD1/5/8 that travel to the nucleus and act as activators and repressors of transcription of target genes. Positively regulates the expression of odontogenic development regulator MSX1 via inducing the IPO7-mediated import of SMAD1 to the nucleus. Required for MSX1-mediated mesenchymal molar tooth bud development beyond the bud stage, via promoting Wnt signaling. Acts as a positive regulator of odontoblast differentiation during mesenchymal tooth germ formation, expression is repressed during the bell stage by MSX1-mediated inhibition of CTNNB1 signaling. Able to induce its own expression in dental mesenchymal cells and also in the neighboring dental epithelial cells via an MSX1-mediated pathway. Can also signal through non-canonical BMP pathways such as ERK/MAP kinase, PI3K/Akt, or SRC cascades. For example, induces SRC phosphorylation which, in turn, activates VEGFR2, leading to an angiogenic response. This is Bone morphogenetic protein 4 from Rattus norvegicus (Rat).